A 75-amino-acid polypeptide reads, in one-letter code: DNA-directed RNA polymerase subunit omega (75 aa).

It belongs to the RNA polymerase subunit omega family. The RNAP catalytic core consists of 2 alpha, 1 beta, 1 beta' and 1 omega subunit. When a sigma factor is associated with the core the holoenzyme is formed, which can initiate transcription.

It catalyses the reaction RNA(n) + a ribonucleoside 5'-triphosphate = RNA(n+1) + diphosphate. Promotes RNA polymerase assembly. Latches the N- and C-terminal regions of the beta' subunit thereby facilitating its interaction with the beta and alpha subunits. This Nitratidesulfovibrio vulgaris (strain DSM 19637 / Miyazaki F) (Desulfovibrio vulgaris) protein is DNA-directed RNA polymerase subunit omega.